The sequence spans 400 residues: MNPASAPPPLPPPGQQVIHVTQDLDTDLEALFNSVMNPKPSSWRKKILPESFFKEPDSGSHSRQSSTDSSGGHPGPRLAGGAQHVRSHSSPASLQLGTGAGAAGSPAQQHAHLRQQSYDVTDELPLPPGWEMTFTATGQRYFLNHIEKITTWQDPRKAMNQPLNHMNLHPAVSSTPVPQRSMAVSQPNLVMNHQHQQQMAPSTLSQQNHPTQNPPAGLMSMPNALTTQQQQQQKLRLQRIQMERERIRMRQEELMRQEAALCRQLPMEAETLAPVQAAVNPPTMTPDMRSITNNSSDPFLNGGPYHSREQSTDSGLGLGCYSVPTTPEDFLSNVDEMDTGENAGQTPMNINPQQTRFPDFLDCLPGTNVDLGTLESEDLIPLFNDVESALNKSEPFLTWL.

A Glycyl lysine isopeptide (Lys-Gly) (interchain with G-Cter in ubiquitin) cross-link involves residue Lys-46. The tract at residues 52–117 is disordered; the sequence is FFKEPDSGSH…QQHAHLRQQS (66 aa). Polar residues predominate over residues 61–70; it reads HSRQSSTDSS. Ser-62 carries the phosphoserine modification. Ser-89 carries the post-translational modification Phosphoserine; by LATS2. Residue Ser-105 is modified to Phosphoserine. The WW domain maps to 124–157; that stretch reads LPLPPGWEMTFTATGQRYFLNHIEKITTWQDPRK. Residues 222–400 are required for interaction with PALS1; it reads PNALTTQQQQ…NKSEPFLTWL (179 aa). Residues 225 to 259 are a coiled coil; sequence LTTQQQQQQKLRLQRIQMERERIRMRQEELMRQEA. Ser-295 carries the phosphoserine modification. Phosphoserine; by LATS2 is present on Ser-311. The PDZ-binding motif lies at 394–400; sequence EPFLTWL.

In terms of assembly, binds to SLC9A3R2 via the PDZ motif at the plasma membrane. Binds to YWHAZ in vivo and in vitro through the phosphoserine-binding motif RSHSSP. Interacts (via coiled-coil domain) with SMAD2 (via MH1 domain), SMAD3 and SMAD4. Interacts with MED15. Interacts with PAX8 and NKX2-1. Interacts with TEAD1, TEAD2, TEAD3 and TEAD4. Interacts (via WW domain) with PALS1. Interacts with LATS1. Interacts with YAP1 (when phosphorylated at 'Ser-127'). Interacts (via WW domain) with PRRG4 (via cytoplasmic domain). Interacts (via WW domain) with AMOTL2 (via PPXY motif); the interaction promotes WWTR1/TAZ localization to the cytoplasm and tight junctions, thereby inhibiting its transcriptional coactivator properties. Interacts (via WW domain) with AMOT isoform 1; the interaction facilitates translocation of WWTR1/TAZ to the cytoplasm. In terms of processing, phosphorylated by LATS2 and STK3/MST2. Phosphorylation by LATS2 results in creation of 14-3-3 binding sites, retention in the cytoplasm, and functional inactivation. Phosphorylation results in the inhibition of transcriptional coactivation through YWHAZ-mediated nuclear export. Phosphorylated in the nucleus by PRP4K; phosphorylation leads to nuclear exclusion. Post-translationally, ubiquitinated at Lys-46; leading to proteasomal degradation. Deubiquitinated and stabilized by UCHL1 at Lys-46; leading to inhibition of osteoclastogenesis. As to expression, highly expressed in kidney, heart, placenta and lung. Expressed in the thyroid tissue.

It localises to the nucleus. The protein localises to the cytoplasm. It is found in the cell membrane. The protein resides in the cell junction. Its subcellular location is the tight junction. Its function is as follows. Transcriptional coactivator which acts as a downstream regulatory target in the Hippo signaling pathway that plays a pivotal role in organ size control and tumor suppression by restricting proliferation and promoting apoptosis. The core of this pathway is composed of a kinase cascade wherein STK3/MST2 and STK4/MST1, in complex with its regulatory protein SAV1, phosphorylates and activates LATS1/2 in complex with its regulatory protein MOB1, which in turn phosphorylates and inactivates YAP1 oncoprotein and WWTR1/TAZ. WWTR1 enhances PAX8 and NKX2-1/TTF1-dependent gene activation. In conjunction with YAP1, involved in the regulation of TGFB1-dependent SMAD2 and SMAD3 nuclear accumulation. Plays a key role in coupling SMADs to the transcriptional machinery such as the mediator complex. Regulates embryonic stem-cell self-renewal, promotes cell proliferation and epithelial-mesenchymal transition. The chain is WW domain-containing transcription regulator protein 1 from Homo sapiens (Human).